Consider the following 2430-residue polypeptide: DNA-directed RNA polymerase subunit beta'' (2430 aa).

Positions 336, 455, 462, and 465 each coordinate Zn(2+).

The protein belongs to the RNA polymerase beta' chain family. RpoC2 subfamily. As to quaternary structure, in plastids the minimal PEP RNA polymerase catalytic core is composed of four subunits: alpha, beta, beta', and beta''. When a (nuclear-encoded) sigma factor is associated with the core the holoenzyme is formed, which can initiate transcription. Zn(2+) is required as a cofactor.

The protein resides in the plastid. The protein localises to the chloroplast. It carries out the reaction RNA(n) + a ribonucleoside 5'-triphosphate = RNA(n+1) + diphosphate. DNA-dependent RNA polymerase catalyzes the transcription of DNA into RNA using the four ribonucleoside triphosphates as substrates. The chain is DNA-directed RNA polymerase subunit beta'' from Stigeoclonium helveticum (Green alga).